Consider the following 727-residue polypeptide: Glucans biosynthesis glucosyltransferase H (727 aa).

The disordered stretch occupies residues 18-43 (SAMPNERPGAMEPQSLSQMPEGFPRR). Helical transmembrane passes span 58–78 (FFVV…MGAV), 94–114 (LFAI…AGFF), 278–298 (LQQF…GWWV), 408–428 (IMAY…LMLA), 460–480 (LFYI…LLLL), 496–516 (ILSV…MMFI), and 572–592 (LLAW…ISAW).

Belongs to the glycosyltransferase 2 family. OpgH subfamily.

The protein localises to the cell inner membrane. Its pathway is glycan metabolism; osmoregulated periplasmic glucan (OPG) biosynthesis. Involved in the biosynthesis of osmoregulated periplasmic glucans (OPGs). In Shewanella sp. (strain ANA-3), this protein is Glucans biosynthesis glucosyltransferase H.